The following is a 235-amino-acid chain: NAD(P)H-quinone oxidoreductase subunit K, chloroplastic (235 aa).

Cysteine 43, cysteine 44, cysteine 108, and cysteine 139 together coordinate [4Fe-4S] cluster.

Belongs to the complex I 20 kDa subunit family. In terms of assembly, NDH is composed of at least 16 different subunits, 5 of which are encoded in the nucleus. Requires [4Fe-4S] cluster as cofactor.

It localises to the plastid. The protein resides in the chloroplast thylakoid membrane. The catalysed reaction is a plastoquinone + NADH + (n+1) H(+)(in) = a plastoquinol + NAD(+) + n H(+)(out). The enzyme catalyses a plastoquinone + NADPH + (n+1) H(+)(in) = a plastoquinol + NADP(+) + n H(+)(out). In terms of biological role, NDH shuttles electrons from NAD(P)H:plastoquinone, via FMN and iron-sulfur (Fe-S) centers, to quinones in the photosynthetic chain and possibly in a chloroplast respiratory chain. The immediate electron acceptor for the enzyme in this species is believed to be plastoquinone. Couples the redox reaction to proton translocation, and thus conserves the redox energy in a proton gradient. This Ipomoea purpurea (Common morning glory) protein is NAD(P)H-quinone oxidoreductase subunit K, chloroplastic.